A 515-amino-acid polypeptide reads, in one-letter code: MGSLGEVVEHGVSKDMLPFDGHPDPVVDELNRLENLLREKDRELGHAYSEIKGLKVTEALKDKAIAELTKELKKQDEKLSSLEKQLEQKNLDVKRLSNERKEALSAQFAAEATLRRIHSSQKDEEVVPFDAIIAPLESDIKAYRHEIALLQDDKKALERHLKLKEAALVEAGNILRSALERALIVEDVQNQNIELKKQMEIYHEENKLLEKSNRQQVLDIERLTHTIAELEESILSTGDVANAVRFYQNQAAKLNEEKRTLERELARAKVYVNRVASTTANEWKDDADKLMPVKRWLEERRLLQGEIQRLRDKIAMAEKSAKAEAQLNDKLRRKLKALEDDMRNESSNTSASNKDNATSKQATPKRSSSQPRRPIISADGADKRRPASQPRASVSGKVLNKQPGSETEAAEKNRHAAAKRFDSPRSAKSVAAGGRGERPVRSHLWAHRSKVADDAGKENKEQNPNYKAHLGDSHADGDCGVQCSEHEEAMDLRKLDEGKADDSDAVKSTKDSCEI.

Coiled coils occupy residues Val26–Ala106 and Leu136–Ala351. Residues Leu208–Ala410 form a required for targeting to microtubules region. The interval Asp340–Ile515 is disordered. A compositionally biased stretch (polar residues) spans Glu345–Ala362. Positions Pro364–Pro374 are enriched in low complexity. Composition is skewed to basic and acidic residues over residues Ala409–Arg425, Lys450–Glu461, and Ser484–Ile515.

Belongs to the MAP70 family.

The protein resides in the cytoplasm. The protein localises to the cytoskeleton. In terms of biological role, plant-specific protein that interact with microtubules. The sequence is that of Microtubule-associated protein 70-4 (MAP70.4) from Oryza sativa subsp. japonica (Rice).